The primary structure comprises 433 residues: Trigger factor (433 aa).

Residues 161-246 enclose the PPIase FKBP-type domain; the sequence is EDRATIDFTG…LKKVEERELP (86 aa).

Belongs to the FKBP-type PPIase family. Tig subfamily.

Its subcellular location is the cytoplasm. The enzyme catalyses [protein]-peptidylproline (omega=180) = [protein]-peptidylproline (omega=0). In terms of biological role, involved in protein export. Acts as a chaperone by maintaining the newly synthesized protein in an open conformation. Functions as a peptidyl-prolyl cis-trans isomerase. The chain is Trigger factor from Edwardsiella ictaluri (strain 93-146).